The sequence spans 181 residues: Adenylate kinase (181 aa).

10–15 (GAGKGT) provides a ligand contact to ATP. The interval 30–59 (STGDLFRANIGQATALGVEAKKYIDAGELV) is NMP. AMP contacts are provided by residues T31, R36, 57 to 59 (ELV), 85 to 88 (GFPR), and Q92. Residues 126–132 (ARGRADD) are LID. R127 contacts ATP. AMP is bound by residues R129 and R140. G166 serves as a coordination point for ATP.

It belongs to the adenylate kinase family. As to quaternary structure, monomer.

It is found in the cytoplasm. It catalyses the reaction AMP + ATP = 2 ADP. It functions in the pathway purine metabolism; AMP biosynthesis via salvage pathway; AMP from ADP: step 1/1. Its function is as follows. Catalyzes the reversible transfer of the terminal phosphate group between ATP and AMP. Plays an important role in cellular energy homeostasis and in adenine nucleotide metabolism. This is Adenylate kinase from Rhodococcus erythropolis (strain PR4 / NBRC 100887).